Reading from the N-terminus, the 242-residue chain is Probable transcriptional regulatory protein lp_2253 (242 aa).

A disordered region spans residues 1 to 21 (MSGHSKWHNIQGRKNAQDAKR).

It belongs to the TACO1 family.

The protein resides in the cytoplasm. This is Probable transcriptional regulatory protein lp_2253 from Lactiplantibacillus plantarum (strain ATCC BAA-793 / NCIMB 8826 / WCFS1) (Lactobacillus plantarum).